A 273-amino-acid polypeptide reads, in one-letter code: Formamidopyrimidine-DNA glycosylase (273 aa).

The active-site Schiff-base intermediate with DNA is P2. The Proton donor role is filled by E3. K57 (proton donor; for beta-elimination activity) is an active-site residue. Residues H91, R110, and K151 each coordinate DNA. The FPG-type zinc finger occupies 236–270 (QVYGRKGEACNDCGTIIEAKVIGQRNSYFCPHCQI). R260 acts as the Proton donor; for delta-elimination activity in catalysis.

It belongs to the FPG family. Monomer. Zn(2+) serves as cofactor.

The catalysed reaction is Hydrolysis of DNA containing ring-opened 7-methylguanine residues, releasing 2,6-diamino-4-hydroxy-5-(N-methyl)formamidopyrimidine.. The enzyme catalyses 2'-deoxyribonucleotide-(2'-deoxyribose 5'-phosphate)-2'-deoxyribonucleotide-DNA = a 3'-end 2'-deoxyribonucleotide-(2,3-dehydro-2,3-deoxyribose 5'-phosphate)-DNA + a 5'-end 5'-phospho-2'-deoxyribonucleoside-DNA + H(+). Involved in base excision repair of DNA damaged by oxidation or by mutagenic agents. Acts as a DNA glycosylase that recognizes and removes damaged bases. Has a preference for oxidized purines, such as 7,8-dihydro-8-oxoguanine (8-oxoG). Has AP (apurinic/apyrimidinic) lyase activity and introduces nicks in the DNA strand. Cleaves the DNA backbone by beta-delta elimination to generate a single-strand break at the site of the removed base with both 3'- and 5'-phosphates. The chain is Formamidopyrimidine-DNA glycosylase from Actinobacillus pleuropneumoniae serotype 7 (strain AP76).